Consider the following 426-residue polypeptide: Enolase 2 (426 aa).

Q163 provides a ligand contact to (2R)-2-phosphoglycerate. The Proton donor role is filled by E205. Mg(2+) contacts are provided by D242, E285, and D312. (2R)-2-phosphoglycerate-binding residues include K337, R366, S367, and K388. Residue K337 is the Proton acceptor of the active site.

This sequence belongs to the enolase family. Mg(2+) is required as a cofactor.

It localises to the cytoplasm. The protein localises to the secreted. Its subcellular location is the cell surface. It catalyses the reaction (2R)-2-phosphoglycerate = phosphoenolpyruvate + H2O. It functions in the pathway carbohydrate degradation; glycolysis; pyruvate from D-glyceraldehyde 3-phosphate: step 4/5. In terms of biological role, catalyzes the reversible conversion of 2-phosphoglycerate (2-PG) into phosphoenolpyruvate (PEP). It is essential for the degradation of carbohydrates via glycolysis. The polypeptide is Enolase 2 (Methanospirillum hungatei JF-1 (strain ATCC 27890 / DSM 864 / NBRC 100397 / JF-1)).